The primary structure comprises 373 residues: Queuine tRNA-ribosyltransferase (373 aa).

Asp93 (proton acceptor) is an active-site residue. Substrate contacts are provided by residues 93–97 (DSGGF), Asp147, Gln191, and Gly218. The interval 249–255 (GVGAPRD) is RNA binding. Asp268 (nucleophile) is an active-site residue. Residues 273-277 (TRNAR) form an RNA binding; important for wobble base 34 recognition region. Zn(2+)-binding residues include Cys306, Cys308, Cys311, and His337.

Belongs to the queuine tRNA-ribosyltransferase family. Homodimer. Within each dimer, one monomer is responsible for RNA recognition and catalysis, while the other monomer binds to the replacement base PreQ1. The cofactor is Zn(2+).

The catalysed reaction is 7-aminomethyl-7-carbaguanine + guanosine(34) in tRNA = 7-aminomethyl-7-carbaguanosine(34) in tRNA + guanine. It participates in tRNA modification; tRNA-queuosine biosynthesis. Catalyzes the base-exchange of a guanine (G) residue with the queuine precursor 7-aminomethyl-7-deazaguanine (PreQ1) at position 34 (anticodon wobble position) in tRNAs with GU(N) anticodons (tRNA-Asp, -Asn, -His and -Tyr). Catalysis occurs through a double-displacement mechanism. The nucleophile active site attacks the C1' of nucleotide 34 to detach the guanine base from the RNA, forming a covalent enzyme-RNA intermediate. The proton acceptor active site deprotonates the incoming PreQ1, allowing a nucleophilic attack on the C1' of the ribose to form the product. After dissociation, two additional enzymatic reactions on the tRNA convert PreQ1 to queuine (Q), resulting in the hypermodified nucleoside queuosine (7-(((4,5-cis-dihydroxy-2-cyclopenten-1-yl)amino)methyl)-7-deazaguanosine). This is Queuine tRNA-ribosyltransferase from Solidesulfovibrio magneticus (strain ATCC 700980 / DSM 13731 / RS-1) (Desulfovibrio magneticus).